Consider the following 712-residue polypeptide: Sterol uptake control protein 2 (712 aa).

Residues 1–19 (MMMTVKQESPNSTLNTSEF) are compositionally biased toward polar residues. A disordered region spans residues 1–52 (MMMTVKQESPNSTLNTSEFSSDENLKTNNSEPPKKVSKSSTGKRKYHQKSRN). Basic residues predominate over residues 35-50 (KVSKSSTGKRKYHQKS). The segment at residues 54-81 (CSTCKKRRVKCDEQRPVCGNCTKLKLDC) is a DNA-binding region (zn(2)-C6 fungal-type). Disordered stretches follow at residues 95–150 (KKDI…VIPP) and 236–342 (TTVP…ANPL). Polar residues-rich tracts occupy residues 113 to 143 (STVS…QDIK), 252 to 306 (RKSQ…SGSP), and 326 to 337 (KSLPNISPNMSI).

It localises to the nucleus. In terms of biological role, transcription factor involved in the regulation of ergosterol biosynthetic genes such as ERG2 and ERG11 through direct binding to sterol response elements (SREs) in the promoters. Also binds to its own promoter on 2 cis-acting elements to promote autoregulation. Regulates sterol uptake across the plasma membrane. Acts as a major regulator of ascorbic acid-induced response. Plays a role in the triggering of pyroptosis, an inflammasome-mediated programmed cell death pathway in macrophages, allowing macrophages escaping. The protein is Sterol uptake control protein 2 of Candida albicans (strain SC5314 / ATCC MYA-2876) (Yeast).